We begin with the raw amino-acid sequence, 321 residues long: tRNA U34 carboxymethyltransferase (321 aa).

Carboxy-S-adenosyl-L-methionine-binding positions include Lys90, Trp104, Lys109, Gly129, 151–153 (DPT), 180–181 (IE), Met195, Tyr199, and Arg314.

Belongs to the class I-like SAM-binding methyltransferase superfamily. CmoB family. In terms of assembly, homotetramer.

The catalysed reaction is carboxy-S-adenosyl-L-methionine + 5-hydroxyuridine(34) in tRNA = 5-carboxymethoxyuridine(34) in tRNA + S-adenosyl-L-homocysteine + H(+). In terms of biological role, catalyzes carboxymethyl transfer from carboxy-S-adenosyl-L-methionine (Cx-SAM) to 5-hydroxyuridine (ho5U) to form 5-carboxymethoxyuridine (cmo5U) at position 34 in tRNAs. This is tRNA U34 carboxymethyltransferase from Haemophilus influenzae (strain 86-028NP).